A 482-amino-acid polypeptide reads, in one-letter code: MTVIIAGERSGAGKTTITLAMLAYLARQKLRVQSFKVGPDYIDPMFHSQITGRPCRNLDPFLTSEAYVQRCFHYHSQGTPYSLIEGVMGLFDGVPYQGLTDYSSTAHIARLLNLPIVFVMDCQRLSGSVAAIVQGYRHWQPGVNLVGVILNRVGGDRHLELLKIALEPLRIPILGVFFRQQDLTLPDRHLGLVPCGELPQIQQYFDQLAHVAAQQLDWPKLLPLLETPRNLPSPMSLFDVPQKSPQARLAIAQDQAFNFYYADNLDLLTHCGFELIPFSPLEDTELPPAIDGVYLGGGFPELFAEQLSQNQALKDQLKTLIHQGLPTYGECGGLMYLSQSLTNFEGQIFPMLEMLPTAVTMGGKLSLGYRQAQVVNSHSWLWQTESLRGHEFHRSQMTKLPNQALYRQRGLLAIDQNTTDGWCVGSVQASYLHLHWGSQISTVEKFRAACLAFQKKLSYLGKHPPFKSVPLRNTGGDAHGRE.

The GATase cobBQ-type domain occupies 248 to 441 (RLAIAQDQAF…LHLHWGSQIS (194 aa)). Cys-331 (nucleophile) is an active-site residue.

It belongs to the CobB/CbiA family. Requires Mg(2+) as cofactor.

It carries out the reaction cob(II)yrinate + 2 L-glutamine + 2 ATP + 2 H2O = cob(II)yrinate a,c diamide + 2 L-glutamate + 2 ADP + 2 phosphate + 2 H(+). It participates in cofactor biosynthesis; adenosylcobalamin biosynthesis; cob(II)yrinate a,c-diamide from sirohydrochlorin (anaerobic route): step 10/10. In terms of biological role, catalyzes the ATP-dependent amidation of the two carboxylate groups at positions a and c of cobyrinate, using either L-glutamine or ammonia as the nitrogen source. The protein is Cobyrinate a,c-diamide synthase of Synechocystis sp. (strain ATCC 27184 / PCC 6803 / Kazusa).